Reading from the N-terminus, the 629-residue chain is Probable alpha-L-arabinofuranosidase A (629 aa).

The N-terminal stretch at 1-25 (MVALSTLSGLSALPFLFSLVQNVYG) is a signal peptide. Asn36, Asn51, Asn140, Asn152, Asn168, Asn171, Asn260, Asn494, and Asn534 each carry an N-linked (GlcNAc...) asparagine glycan.

It belongs to the glycosyl hydrolase 51 family.

It is found in the secreted. It catalyses the reaction Hydrolysis of terminal non-reducing alpha-L-arabinofuranoside residues in alpha-L-arabinosides.. It functions in the pathway glycan metabolism; L-arabinan degradation. Its function is as follows. Alpha-L-arabinofuranosidase involved in the degradation of arabinoxylan, a major component of plant hemicellulose. Acts only on small linear 1,5-alpha-linked L-arabinofuranosyl oligosaccharides. The chain is Probable alpha-L-arabinofuranosidase A (abfA) from Aspergillus oryzae (strain ATCC 42149 / RIB 40) (Yellow koji mold).